A 679-amino-acid polypeptide reads, in one-letter code: tRNA uridine 5-carboxymethylaminomethyl modification enzyme MnmG (679 aa).

15–20 (GAGHAG) serves as a coordination point for FAD. 314–328 (GPRYCPSIEDKIVRF) contributes to the NAD(+) binding site.

The protein belongs to the MnmG family. Homodimer. Heterotetramer of two MnmE and two MnmG subunits. FAD serves as cofactor.

Its subcellular location is the cytoplasm. Functionally, NAD-binding protein involved in the addition of a carboxymethylaminomethyl (cmnm) group at the wobble position (U34) of certain tRNAs, forming tRNA-cmnm(5)s(2)U34. The chain is tRNA uridine 5-carboxymethylaminomethyl modification enzyme MnmG from Roseiflexus sp. (strain RS-1).